The following is a 99-amino-acid chain: Co-chaperonin GroES (99 aa).

This sequence belongs to the GroES chaperonin family. As to quaternary structure, heptamer of 7 subunits arranged in a ring. Interacts with the chaperonin GroEL.

The protein resides in the cytoplasm. Together with the chaperonin GroEL, plays an essential role in assisting protein folding. The GroEL-GroES system forms a nano-cage that allows encapsulation of the non-native substrate proteins and provides a physical environment optimized to promote and accelerate protein folding. GroES binds to the apical surface of the GroEL ring, thereby capping the opening of the GroEL channel. This chain is Co-chaperonin GroES, found in Methylacidiphilum infernorum (isolate V4) (Methylokorus infernorum (strain V4)).